An 89-amino-acid chain; its full sequence is Small ribosomal subunit protein bS20 (89 aa).

The tract at residues M1–S28 is disordered.

The protein belongs to the bacterial ribosomal protein bS20 family.

Its function is as follows. Binds directly to 16S ribosomal RNA. This is Small ribosomal subunit protein bS20 from Mannheimia succiniciproducens (strain KCTC 0769BP / MBEL55E).